The following is a 603-amino-acid chain: Multicopper oxidase MCE (603 aa).

Positions 1-21 (MNTFICSALICLSWLPGFIQA) are cleaved as a signal peptide. In terms of domain architecture, Plastocyanin-like 1 spans 30–144 (ITYAKGAPDG…YGALWIRPKE (115 aa)). An N-linked (GlcNAc...) asparagine glycan is attached at Asn-75. Cu cation contacts are provided by His-79, His-81, His-123, and His-125. N-linked (GlcNAc...) asparagine glycans are attached at residues Asn-155, Asn-180, Asn-235, Asn-256, Asn-272, Asn-275, Asn-388, Asn-394, Asn-413, and Asn-455. The 181-residue stretch at 173-353 (LIVSDWSNFT…TPGDYTIRLP (181 aa)) folds into the Plastocyanin-like 2 domain. The 132-residue stretch at 450-581 (LLYNPNSTAA…GGMAGVIMDG (132 aa)) folds into the Plastocyanin-like 3 domain. A Cu cation-binding site is contributed by His-495. Asn-512 and Asn-595 each carry an N-linked (GlcNAc...) asparagine glycan.

Belongs to the multicopper oxidase family.

The enzyme catalyses 4 monapinone A + O2 = 2 dinapinone A + 2 H2O. It carries out the reaction 4 monapinone E + O2 = 2 dinapinone E + 2 H2O. It participates in secondary metabolite biosynthesis. In terms of biological role, multicopper oxidase; part of the gene cluster that mediates the biosynthesis of dinapinones DPA1 (or (M)-DPA) and DPA2 (or (P)-DPA), biaryl dihydronaphthopyranones that act in concert as inhibitors of triacylglycerol accumulation in mammalian cells. The first step in the pathway corresponds to the biosynthesis of dihydroxy-decanoyl-CoA by the fungal type I fatty acid synthase (formed by ORF4 and ORF5). The cluster-specific polyketide synthase (ORF7) then accepts and extends dihydroxy-decanoyl-CoA with 6 malonyl-CoA moieties and cyclizes the molecule to produce a putative polyhydroxynaphthopyranone intermediate, which is further methylated by the cluster-specific methyltransferase (ORF1) at 7-OH to produce monapinone A (MPA). MCE catalyzes the regioselective biaryl coupling of monapinone A (MPA) at the 8,8'-positions to afford dimeric atropisomers DPA1 and DPA2 in a ratio of approximately 1:2.5. Monapinone E (MPE) also appears to be a substrate for MCE and provides the atropisomers dinapinones DPE1 (or (M)-DPE) and DPE2 (or (P)-DPE). In Talaromyces pinophilus (Penicillium pinophilum), this protein is Multicopper oxidase MCE.